We begin with the raw amino-acid sequence, 58 residues long: uncharacterized protein (58 aa).

Residues 3–52 (KVILEHLQRIEKQLEILNSKIENFLGFEELSEEELKELDEIEAKMEKGEK) are a coiled coil.

This is an uncharacterized protein from Archaeoglobus fulgidus (strain ATCC 49558 / DSM 4304 / JCM 9628 / NBRC 100126 / VC-16).